Here is a 749-residue protein sequence, read N- to C-terminus: Soluble starch synthase 2-1, chloroplastic/amyloplastic (749 aa).

Residues methionine 1–threonine 44 constitute a chloroplast transit peptide. An ADP-alpha-D-glucose-binding site is contributed by lysine 272.

The protein belongs to the glycosyltransferase 1 family. Bacterial/plant glycogen synthase subfamily. In terms of tissue distribution, expressed in endosperm, leaves, and weakly in roots.

The protein resides in the plastid. It localises to the amyloplast. It is found in the chloroplast. The catalysed reaction is [(1-&gt;4)-alpha-D-glucosyl](n) + ADP-alpha-D-glucose = [(1-&gt;4)-alpha-D-glucosyl](n+1) + ADP + H(+). Its pathway is glycan biosynthesis; starch biosynthesis. In terms of biological role, may be involved in starch synthesis in endosperm amyloplasts and contribute to the deposition of transient starch in chloroplasts of leaves. In Oryza sativa subsp. japonica (Rice), this protein is Soluble starch synthase 2-1, chloroplastic/amyloplastic (SSII-1).